A 114-amino-acid polypeptide reads, in one-letter code: Putative antiporter subunit mnhC2 (114 aa).

3 helical membrane passes run 3–23, 28–48, and 72–92; these read LILLLVIGFLVFIGTYMILSI, IVIGISIYTHAGNLIIMSMGT, and AIVLTAIVIGFGMTAFLLVLV.

This sequence belongs to the CPA3 antiporters (TC 2.A.63) subunit C family. May form a heterooligomeric complex that consists of seven subunits: mnhA2, mnhB2, mnhC2, mnhD2, mnhE2, mnhF2 and mnhG2.

It localises to the cell membrane. The protein is Putative antiporter subunit mnhC2 (mnhC2) of Staphylococcus aureus (strain Mu3 / ATCC 700698).